The sequence spans 448 residues: MKAVVIGAGEVGYHIAKFLSLTHDVIVIENDEDALRRADELDVQVVEGNGANADILASVLPDVDILVAVTGVDEVNIVACMTAKLILRAHPGWKETKTIARVSNPDYIDVPVTSRAQVGVDIMICPELALASEVAEVLSNPSAIDAEMFAGGKVQMMEFAIRPDNRLVGKRMQDIELEDCCIVSAIFRNNDIIIPHGDDFIKANDHMVVVGKPRAMADLENVFGNEGPHRNRILLIGCGIVGFYLAKIIDKDENADLKVIEYRKSRCIEVAEMLENALILNGDGTDVNLLREENIEDMDVVIAVTDNDEKNLLCSLLAKQMGAKKVIARADRSDYVPLFEMVGIDIAVSPREATVNEVLKLTMGKGIEALATIEGEKAEIIEYTASGQSKIVGKPLSKIKFPKGAIVTMVVHDDDVIIPRGEFIIREGDRVIIFALSSAVRSVEKLFK.

The region spanning 1–124 (MKAVVIGAGE…RAQVGVDIMI (124 aa)) is the RCK N-terminal 1 domain. NAD(+) is bound by residues 7 to 11 (GAGEV), Glu29, 70 to 71 (TG), and Arg101. In terms of domain architecture, RCK C-terminal 1 spans 144-225 (IDAEMFAGGK…MADLENVFGN (82 aa)). One can recognise an RCK N-terminal 2 domain in the interval 230–348 (RNRILLIGCG…FEMVGIDIAV (119 aa)). Residue 232-262 (RILLIGCGIVGFYLAKIIDKDENADLKVIEY) participates in NAD(+) binding. The RCK C-terminal 2 domain maps to 368–448 (EALATIEGEK…AVRSVEKLFK (81 aa)).

Functionally, part of a potassium transport system. The protein is Trk system potassium uptake protein TrkA homolog 2 (trkA2) of Methanosarcina mazei (strain ATCC BAA-159 / DSM 3647 / Goe1 / Go1 / JCM 11833 / OCM 88) (Methanosarcina frisia).